We begin with the raw amino-acid sequence, 21 residues long: Thanatin (21 aa).

Cys-11 and Cys-18 are disulfide-bonded.

Its subcellular location is the secreted. Insect defense peptide with a broad spectrum of activity against Gram-positive and Gram-negative bacteria and fungi. No activity against S.aureus. Stops respiration in bacteria but does not permeabilize their inner membranes. The polypeptide is Thanatin (Podisus maculiventris (Spined soldier bug)).